We begin with the raw amino-acid sequence, 63 residues long: UPF0337 protein RA1131 (63 aa).

Positions 1-63 are disordered; it reads MGSAKDKVAG…DAVKGAVDKT (63 aa). The span at 34-49 shows a compositional bias: low complexity; sequence AKGAAQEAKGGAQQAK. Positions 51 to 63 are enriched in basic and acidic residues; sequence KLKDAVKGAVDKT.

This sequence belongs to the UPF0337 (CsbD) family.

The protein is UPF0337 protein RA1131 of Rhizobium meliloti (strain 1021) (Ensifer meliloti).